The primary structure comprises 96 residues: UPF0235 protein YggU (96 aa).

Belongs to the UPF0235 family.

This Salmonella newport (strain SL254) protein is UPF0235 protein YggU.